We begin with the raw amino-acid sequence, 117 residues long: Prefoldin subunit beta (117 aa).

It belongs to the prefoldin subunit beta family. Heterohexamer of two alpha and four beta subunits.

It localises to the cytoplasm. Functionally, molecular chaperone capable of stabilizing a range of proteins. Seems to fulfill an ATP-independent, HSP70-like function in archaeal de novo protein folding. This chain is Prefoldin subunit beta, found in Thermococcus kodakarensis (strain ATCC BAA-918 / JCM 12380 / KOD1) (Pyrococcus kodakaraensis (strain KOD1)).